The chain runs to 691 residues: MARAFPLERVRNIGIAAHIDAGKTTTTERILFYSGVVHKIGEVHDGAAVTDWMAQERERGITITAAAISTSWNDHRINIIDTPGHVDFTIEVERSMRVLDGVIAVFCAVGGVQPQSETVWRQADRYSVPRMVFVNKMDRTGADFLKVHGQIKDRLKANAAPIQLPIGAEGDLSGIIDLVENKAHIYKDDLGQNIEVTDVPDDMKDQVAEWRTYLMEAVAETDEALIEKFLETGELSVEELKAGIRKGVLKHGLVPVLCGSAFKNKGVQLVLDAVVDYLPAPIDVPPIQGVLPNGEEAVRPSDDKAPFSALAFKVMADPYGKLTFVRMYSGVLAKGSYVLNSTKDSKERISRLVVLKADDREEVDELRAGDLGAVLGLKATTTGDTLCSAEDPIVLETLFVPEPVISVAVEPKTKGDMEKLSKALVALAEEDPTFRVNTDQETGQTVIAGMGELHLEILVDRMLREFKVEANIGAPQVSYRETIRASSRGEGKFSRQTGGKGQYGHVVIEMEPGEPESGFEFINKIVGGVVPKEYIKPSEMGMKETCESGVIAGYPLIDVKVTMIDGSYHDVDSSEMAFKIAGSMAFKDAVKKCNPVLLEPMMKVEVEVPEDFLGSIIGDLSSRRGQVEGQAIDDGTSKVSAKVPLAEMFGYATELRSMTQGRGIFSMEFSHYEDVPRNVAEAIISKNQGNS.

The region spanning 8-282 is the tr-type G domain; that stretch reads ERVRNIGIAA…AVVDYLPAPI (275 aa). GTP-binding positions include 17–24, 81–85, and 135–138; these read AHIDAGKT, DTPGH, and NKMD.

The protein belongs to the TRAFAC class translation factor GTPase superfamily. Classic translation factor GTPase family. EF-G/EF-2 subfamily.

The protein resides in the cytoplasm. Catalyzes the GTP-dependent ribosomal translocation step during translation elongation. During this step, the ribosome changes from the pre-translocational (PRE) to the post-translocational (POST) state as the newly formed A-site-bound peptidyl-tRNA and P-site-bound deacylated tRNA move to the P and E sites, respectively. Catalyzes the coordinated movement of the two tRNA molecules, the mRNA and conformational changes in the ribosome. The polypeptide is Elongation factor G (Synechococcus sp. (strain WH7803)).